The following is a 421-amino-acid chain: GTPase Obg (421 aa).

Positions 1-158 (MYFIDEAINE…FKIKTELKIL (158 aa)) constitute an Obg domain. In terms of domain architecture, OBG-type G spans 159 to 324 (ADVGLIGYPS…LKYKMLEMIK (166 aa)). GTP contacts are provided by residues 165-172 (GYPSVGKS), 190-194 (FTTLK), 211-214 (DLPG), 278-281 (NKMD), and 305-307 (SLL). Mg(2+)-binding residues include Ser172 and Thr192. Residues 342–421 (TLEEEKPDFV…ICDRVFEFIT (80 aa)) enclose the OCT domain.

This sequence belongs to the TRAFAC class OBG-HflX-like GTPase superfamily. OBG GTPase family. Monomer. The cofactor is Mg(2+).

The protein localises to the cytoplasm. An essential GTPase which binds GTP, GDP and possibly (p)ppGpp with moderate affinity, with high nucleotide exchange rates and a fairly low GTP hydrolysis rate. Plays a role in control of the cell cycle, stress response, ribosome biogenesis and in those bacteria that undergo differentiation, in morphogenesis control. The sequence is that of GTPase Obg from Phytoplasma mali (strain AT).